The following is a 127-amino-acid chain: TPAQFDEMIKVTTIIYGLANFSDYGCHCGLNNQGMPVDDIDWCCHSQDCCYNKAEMSGCNPVTQTYRFYVEEQKKVECMKASNRCEKMICECDEKAANCFRKELEDYNIYFRNFSSLGACRGPRPFC.

The N-linked (GlcNAc...) asparagine glycan is linked to Asn20. Disulfide bonds link Cys26/Cys120, Cys28/Cys44, Cys43/Cys99, Cys49/Cys127, Cys50/Cys92, Cys59/Cys85, and Cys78/Cys90. N-linked (GlcNAc...) asparagine glycosylation is present at Asn113.

This sequence belongs to the phospholipase A2 family. As to quaternary structure, monomer. Otoconial membrane in the maculae of the saccule and utricle. Otoconia are composites of proteins and inorganic crystals formed in the peripheral portion of the vestibular system of vertebrates. The otoconial membranes contain small crystals of calcium carbonate known as otoliths (ear stones) if there is a single deposit or as otoconia (ear dust) if there are many. Each mineral polymorph of otoconia has a protein unique to that polymorph.

It is found in the secreted. Functionally, major protein of the aragonitic otoconia. It is unlikely that this protein has phospholipase A2 activity. The chain is Phospholipase A2 homolog otoconin-22 from Xenopus laevis (African clawed frog).